Here is a 278-residue protein sequence, read N- to C-terminus: 4-diphosphocytidyl-2-C-methyl-D-erythritol kinase (278 aa).

The active site involves lysine 9. 89–99 (PVASGIGGGSA) serves as a coordination point for ATP. The active site involves aspartate 128.

Belongs to the GHMP kinase family. IspE subfamily.

It carries out the reaction 4-CDP-2-C-methyl-D-erythritol + ATP = 4-CDP-2-C-methyl-D-erythritol 2-phosphate + ADP + H(+). Its pathway is isoprenoid biosynthesis; isopentenyl diphosphate biosynthesis via DXP pathway; isopentenyl diphosphate from 1-deoxy-D-xylulose 5-phosphate: step 3/6. Its function is as follows. Catalyzes the phosphorylation of the position 2 hydroxy group of 4-diphosphocytidyl-2C-methyl-D-erythritol. This Cereibacter sphaeroides (strain KD131 / KCTC 12085) (Rhodobacter sphaeroides) protein is 4-diphosphocytidyl-2-C-methyl-D-erythritol kinase.